A 149-amino-acid polypeptide reads, in one-letter code: L-alanine exporter AlaE (149 aa).

A run of 4 helical transmembrane segments spans residues phenylalanine 16–methionine 36, leucine 46–isoleucine 66, alanine 83–alanine 105, and serine 115–cysteine 135.

It belongs to the AlaE exporter family.

Its subcellular location is the cell inner membrane. Its function is as follows. Exports L-alanine. This is L-alanine exporter AlaE from Salmonella typhimurium (strain LT2 / SGSC1412 / ATCC 700720).